The sequence spans 248 residues: 5'-nucleotidase SurE (248 aa).

Residues Asp8, Asp9, Ser39, and Asn91 each contribute to the a divalent metal cation site.

It belongs to the SurE nucleotidase family. A divalent metal cation is required as a cofactor.

The protein localises to the cytoplasm. It catalyses the reaction a ribonucleoside 5'-phosphate + H2O = a ribonucleoside + phosphate. Functionally, nucleotidase that shows phosphatase activity on nucleoside 5'-monophosphates. This chain is 5'-nucleotidase SurE, found in Neisseria meningitidis serogroup B (strain ATCC BAA-335 / MC58).